Reading from the N-terminus, the 109-residue chain is Nucleoid-associated protein YbaB (109 aa).

Belongs to the YbaB/EbfC family. In terms of assembly, homodimer.

Its subcellular location is the cytoplasm. The protein localises to the nucleoid. Its function is as follows. Binds to DNA and alters its conformation. May be involved in regulation of gene expression, nucleoid organization and DNA protection. The polypeptide is Nucleoid-associated protein YbaB (Escherichia coli O8 (strain IAI1)).